We begin with the raw amino-acid sequence, 594 residues long: Protein wntless (594 aa).

At 1–13 the chain is on the cytoplasmic side; that stretch reads MSGTILENLSGRK. Residues 14 to 34 form a helical membrane-spanning segment; sequence LSILVATLLLCQVLCFLLGGL. The Lumenal segment spans residues 35–239; it reads YAPLPAGHVT…AIHQNGGFTQ (205 aa). The N-linked (GlcNAc...) asparagine glycan is linked to Asn-58. The chain crosses the membrane as a helical span at residues 240–260; the sequence is IWLLLKTMLFPFVVGIMIWFW. Residues 261–270 lie on the Cytoplasmic side of the membrane; the sequence is RRVHLLQRSP. A helical transmembrane segment spans residues 271 to 291; it reads ALLEYMLIYLGAALTFLNLPL. The Lumenal segment spans residues 292-311; that stretch reads EYLSLVYEMPYMLLLSDIRQ. A helical transmembrane segment spans residues 312–332; sequence GIFYAMLLTFWLVFAGEHMLI. Topologically, residues 333–344 are cytoplasmic; sequence QDAPNKSTIRSR. A helical transmembrane segment spans residues 345–365; sequence YWKHLSAVVVGCISLFVFDIC. Topologically, residues 366–390 are lumenal; it reads ERGVQLRNPFYSIWTTPLGAKVAMT. A helical transmembrane segment spans residues 391–411; sequence FIVLAGVSAAIYFLFLCYMIW. Over 412–473 the chain is Cytoplasmic; it reads KVFRNIGDKR…ANESKGLIYR (62 aa). A helical transmembrane segment spans residues 474–494; sequence FKFLMLATLVCAALTVAGFIM. Topologically, residues 495-514 are lumenal; the sequence is GQMAEGQWDWNDNVAIQPTS. A helical transmembrane segment spans residues 515–535; the sequence is AFLTGVYGMWNIYIFALLILY. Topologically, residues 536 to 594 are cytoplasmic; it reads APSHKQWPTMHHSDETTQSNENIVASAASEEIEFSHLPSDSNPSEISSLTSFTRKVAFD. The interval 571 to 594 is disordered; it reads HLPSDSNPSEISSLTSFTRKVAFD. Residues 573 to 588 are compositionally biased toward polar residues; that stretch reads PSDSNPSEISSLTSFT.

It belongs to the wntless family. As to quaternary structure, interacts with wg; in the Golgi. Interacts with Vps35, a component of the retromer complex; wls stability is regulated by Vps35. In terms of tissue distribution, ubiquitously expressed in the wing imaginal disk, increased expression is observed in a stripe at the dorso-ventral boundary and other regions of the wing disk that express wg. Also expresses in the leg imaginal disk. During larval development, expression is seen in both motorneurons and muscle.

Its subcellular location is the presynaptic cell membrane. The protein resides in the postsynaptic cell membrane. The protein localises to the cell membrane. It localises to the endosome membrane. It is found in the endoplasmic reticulum membrane. Its subcellular location is the golgi apparatus membrane. Functionally, a segment polarity gene required for wingless (wg)-dependent patterning processes, acting in both wg-sending cells and wg-target cells. In non-neuronal cells wls directs wg secretion. The wls traffic loop encompasses the Golgi, the cell surface, an endocytic compartment and a retrograde route leading back to the Golgi, and involves clathrin-mediated endocytosis and the retromer complex (a conserved protein complex consisting of Vps35 and Vps26). In neuronal cells (the larval motorneuron NMJ), the wg signal moves across the synapse via the release of wls-containing exosome-like vesicles. Postsynaptic wls is required for the trafficking of fz2 through the fz2-interacting protein Grip. This is Protein wntless from Drosophila melanogaster (Fruit fly).